A 500-amino-acid chain; its full sequence is Glycerol kinase (500 aa).

Position 13 (threonine 13) interacts with ADP. Residues threonine 13, threonine 14, and serine 15 each contribute to the ATP site. Threonine 13 contributes to the sn-glycerol 3-phosphate binding site. An ADP-binding site is contributed by arginine 17. Arginine 83, glutamate 84, tyrosine 135, and aspartate 244 together coordinate sn-glycerol 3-phosphate. The glycerol site is built by arginine 83, glutamate 84, tyrosine 135, aspartate 244, and glutamine 245. ADP-binding residues include threonine 266 and glycine 309. ATP contacts are provided by threonine 266, glycine 309, glutamine 313, and glycine 410. Glycine 410 and asparagine 414 together coordinate ADP.

The protein belongs to the FGGY kinase family.

It carries out the reaction glycerol + ATP = sn-glycerol 3-phosphate + ADP + H(+). Its pathway is polyol metabolism; glycerol degradation via glycerol kinase pathway; sn-glycerol 3-phosphate from glycerol: step 1/1. With respect to regulation, inhibited by fructose 1,6-bisphosphate (FBP). In terms of biological role, key enzyme in the regulation of glycerol uptake and metabolism. Catalyzes the phosphorylation of glycerol to yield sn-glycerol 3-phosphate. The polypeptide is Glycerol kinase (Burkholderia multivorans (strain ATCC 17616 / 249)).